The primary structure comprises 409 residues: Phosphatidylserine decarboxylase proenzyme, mitochondrial (409 aa).

The N-terminal 52 residues, 1–52 (MAASVCRPYVRSLPGVMPWRSSSCHYEYTAMHHFLGSFQKLPFEPFNTGARK), are a transit peptide targeting the mitochondrion. The Mitochondrial matrix portion of the chain corresponds to 53–63 (IHTAPVRSLFL). Residues 64 to 82 (LRPVPILLATGGGYAGYRQ) form a helical membrane-spanning segment. Topologically, residues 83-409 (YEKYRDQKLE…IRFGEALGSL (327 aa)) are mitochondrial intermembrane. Residues Asp191, His267, and Ser378 each act as charge relay system; for autoendoproteolytic cleavage activity in the active site. Ser378 (schiff-base intermediate with substrate; via pyruvic acid; for decarboxylase activity) is an active-site residue. Position 378 is a pyruvic acid (Ser); by autocatalysis (Ser378).

It belongs to the phosphatidylserine decarboxylase family. PSD-B subfamily. Eukaryotic type I sub-subfamily. As to quaternary structure, heterodimer of a large membrane-associated beta subunit and a small pyruvoyl-containing alpha subunit. Pyruvate serves as cofactor. In terms of processing, is synthesized initially as an inactive proenzyme. Formation of the active enzyme involves a self-maturation process in which the active site pyruvoyl group is generated from an internal serine residue via an autocatalytic post-translational modification. Two non-identical subunits are generated from the proenzyme in this reaction, and the pyruvate is formed at the N-terminus of the alpha chain, which is derived from the carboxyl end of the proenzyme. The autoendoproteolytic cleavage occurs by a canonical serine protease mechanism, in which the side chain hydroxyl group of the serine supplies its oxygen atom to form the C-terminus of the beta chain, while the remainder of the serine residue undergoes an oxidative deamination to produce ammonia and the pyruvoyl prosthetic group on the alpha chain. During this reaction, the Ser that is part of the protease active site of the proenzyme becomes the pyruvoyl prosthetic group, which constitutes an essential element of the active site of the mature decarboxylase.

It localises to the mitochondrion inner membrane. It is found in the cytoplasm. Its subcellular location is the lipid droplet. The catalysed reaction is a 1,2-diacyl-sn-glycero-3-phospho-L-serine + H(+) = a 1,2-diacyl-sn-glycero-3-phosphoethanolamine + CO2. The protein operates within phospholipid metabolism; phosphatidylethanolamine biosynthesis. Functionally, catalyzes the formation of phosphatidylethanolamine (PtdEtn) from phosphatidylserine (PtdSer). Plays a central role in phospholipid metabolism and in the interorganelle trafficking of phosphatidylserine. May be involved in lipid droplet biogenesis at the endoplasmic reticulum membrane. The protein is Phosphatidylserine decarboxylase proenzyme, mitochondrial of Cricetulus griseus (Chinese hamster).